A 400-amino-acid polypeptide reads, in one-letter code: NAD-dependent protein deacetylase sirtuin-7 (400 aa).

Residues M1–E27 form a disordered region. A compositionally biased stretch (basic and acidic residues) spans R8–E27. A Deacetylase sirtuin-type domain is found at P82–E329. Residues G107–W126 and Q167–D170 contribute to the NAD(+) site. H187 (proton acceptor) is an active-site residue. Zn(2+) contacts are provided by C195, C198, C225, and C228. Residues G268–S270, N297–Q299, and C315 each bind NAD(+). The interval S354 to P380 is disordered. R388 is subject to Asymmetric dimethylarginine; alternate. R388 carries the post-translational modification Omega-N-methylarginine; alternate.

The protein belongs to the sirtuin family. Class IV subfamily. Interacts with UBTF and the RNA polymerase I complex. Interacts with components of the B-WICH complex, such as MYBBP1A, SMARCA5/SNF2H and BAZ1B/WSTF. Interacts with ELK4, leading to stabilization at target promoters for H3K18Ac deacetylation. Interacts with histone H2A and/or histone H2B. Interacts with DNMT1. Interacts with SIRT1. It depends on Zn(2+) as a cofactor. Post-translationally, phosphorylated during mitosis. Methylation at Arg-388 by PRMT6 inhibits the H3K18Ac histone deacetylase activity, promoting mitochondria biogenesis and maintaining mitochondria respiration. In terms of processing, ubiquitinated via 'Lys-63'-linked ubiquitin chains. Deubiquitinated by USP7, inhibiting the H3K18Ac histone deacetylase activity and regulating gluconeogenesis. Ubiquitinated by E3 ubiquitin-protein ligase complex containing FBXO7; leading to proteasomal degradation.

It localises to the nucleus. Its subcellular location is the nucleolus. It is found in the nucleoplasm. The protein localises to the chromosome. The protein resides in the cytoplasm. The catalysed reaction is N(6)-acetyl-L-lysyl-[protein] + NAD(+) + H2O = 2''-O-acetyl-ADP-D-ribose + nicotinamide + L-lysyl-[protein]. It catalyses the reaction N(6)-glutaryl-L-lysyl-[protein] + NAD(+) + H2O = 2''-O-glutaryl-ADP-D-ribose + nicotinamide + L-lysyl-[protein]. The enzyme catalyses N(6)-succinyl-L-lysyl-[protein] + NAD(+) + H2O = 2''-O-succinyl-ADP-D-ribose + nicotinamide + L-lysyl-[protein]. It carries out the reaction N(6)-propanoyl-L-lysyl-[protein] + NAD(+) + H2O = 3''-O-propanoyl-ADP-D-ribose + nicotinamide + L-lysyl-[protein]. The catalysed reaction is N(6)-decanoyl-L-lysyl-[protein] + NAD(+) + H2O = 2''-O-decanoyl-ADP-D-ribose + nicotinamide + L-lysyl-[protein]. Its activity is regulated as follows. NAD-dependent protein-lysine deacetylase and deacylase activities are activated by nucleic acids. Histone deacetylase activity is activated by DNA and nucleosomes. Protein-lysine deacylase activity is activated by RNA. H3K18Ac histone deacetylase activity is inhibited by methylation at Arg-388. H3K18Ac histone deacetylase activity is inhibited by deubiquitination by USP7. Functionally, NAD-dependent protein-lysine deacylase that can act both as a deacetylase or deacylase (desuccinylase, depropionylase, deglutarylase and dedecanoylase), depending on the context. Specifically mediates deacetylation of histone H3 at 'Lys-18' (H3K18Ac). In contrast to other histone deacetylases, displays strong preference for a specific histone mark, H3K18Ac, directly linked to control of gene expression. H3K18Ac is mainly present around the transcription start site of genes and has been linked to activation of nuclear hormone receptors; SIRT7 thereby acts as a transcription repressor. Moreover, H3K18 hypoacetylation has been reported as a marker of malignancy in various cancers and seems to maintain the transformed phenotype of cancer cells. Also able to mediate deacetylation of histone H3 at 'Lys-36' (H3K36Ac) in the context of nucleosomes. Also mediates deacetylation of non-histone proteins, such as ATM, CDK9, DDX21, DDB1, FBL, FKBP5/FKBP51, GABPB1, RAN, RRP9/U3-55K and POLR1E/PAF53. Enriched in nucleolus where it stimulates transcription activity of the RNA polymerase I complex. Acts by mediating the deacetylation of the RNA polymerase I subunit POLR1E/PAF53, thereby promoting the association of RNA polymerase I with the rDNA promoter region and coding region. In response to metabolic stress, SIRT7 is released from nucleoli leading to hyperacetylation of POLR1E/PAF53 and decreased RNA polymerase I transcription. Required to restore the transcription of ribosomal RNA (rRNA) at the exit from mitosis. Promotes pre-ribosomal RNA (pre-rRNA) cleavage at the 5'-terminal processing site by mediating deacetylation of RRP9/U3-55K, a core subunit of the U3 snoRNP complex. Mediates 'Lys-37' deacetylation of Ran, thereby regulating the nuclear export of NF-kappa-B subunit RELA/p65. Acts as a regulator of DNA damage repair by mediating deacetylation of ATM during the late stages of DNA damage response, promoting ATM dephosphorylation and deactivation. Suppresses the activity of the DCX (DDB1-CUL4-X-box) E3 ubiquitin-protein ligase complexes by mediating deacetylation of DDB1, which prevents the interaction between DDB1 and CUL4 (CUL4A or CUL4B). Activates RNA polymerase II transcription by mediating deacetylation of CDK9, thereby promoting 'Ser-2' phosphorylation of the C-terminal domain (CTD) of RNA polymerase II. Deacetylates FBL, promoting histone-glutamine methyltransferase activity of FBL. Acts as a regulator of mitochondrial function by catalyzing deacetylation of GABPB1. Regulates Akt/AKT1 activity by mediating deacetylation of FKBP5/FKBP51. Required to prevent R-loop-associated DNA damage and transcription-associated genomic instability by mediating deacetylation and subsequent activation of DDX21, thereby overcoming R-loop-mediated stalling of RNA polymerases. In addition to protein deacetylase activity, also acts as a protein-lysine deacylase. Acts as a protein depropionylase by mediating depropionylation of Osterix (SP7), thereby regulating bone formation by osteoblasts. Acts as a histone deglutarylase by mediating deglutarylation of histone H4 on 'Lys-91' (H4K91glu); a mark that destabilizes nucleosomes by promoting dissociation of the H2A-H2B dimers from nucleosomes. Acts as a histone desuccinylase: in response to DNA damage, recruited to DNA double-strand breaks (DSBs) and catalyzes desuccinylation of histone H3 on 'Lys-122' (H3K122succ), thereby promoting chromatin condensation and DSB repair. Also promotes DSB repair by promoting H3K18Ac deacetylation, regulating non-homologous end joining (NHEJ). Along with its role in DNA repair, required for chromosome synapsis during prophase I of female meiosis by catalyzing H3K18Ac deacetylation. Involved in transcriptional repression of LINE-1 retrotransposon via H3K18Ac deacetylation, and promotes their association with the nuclear lamina. Required to stabilize ribosomal DNA (rDNA) heterochromatin and prevent cellular senescence induced by rDNA instability. Acts as a negative regulator of SIRT1 by preventing autodeacetylation of SIRT1, restricting SIRT1 deacetylase activity. The protein is NAD-dependent protein deacetylase sirtuin-7 of Homo sapiens (Human).